Here is a 448-residue protein sequence, read N- to C-terminus: Iroquois-class homeodomain protein irx-3 (448 aa).

Residues aspartate 108 to asparagine 170 constitute a DNA-binding region (homeobox; TALE-type). 2 disordered regions span residues lysine 171 to glutamate 250 and serine 387 to serine 410. The span at lysine 195–aspartate 222 shows a compositional bias: acidic residues. Residues threonine 223–serine 237 show a composition bias toward basic and acidic residues. Positions glutamate 238–alanine 248 are enriched in acidic residues. Residues alanine 396 to threonine 406 show a composition bias toward basic and acidic residues.

This sequence belongs to the TALE/IRO homeobox family. In terms of tissue distribution, expressed in the neural plate in overlapping patterns with other irx members, which all share an anterior border of expression. Outside the nervous system and at tailbud stages, expressed in the developing otic vesicle, branchial arches, prospective heart region and pronephros.

Its subcellular location is the nucleus. Functionally, acts partially redundantly with other irx members in neural patterning. Required for formation of the posterior forebrain, midbrain, hindbrain, and to a lesser extent, spinal cord. Both up-regulates and down-regulates gene expression during neural development. Acts early in neural plate development to induce proneural gene expression and specify a neural precursor state. Also up-regulates repressors that prevent neuronal differentiation. Required during at least two stages of pronephros kidney development; during neurula stages, maintains transcription of key renal genes to define the size and identity of the pronephric anlage, probably in part through regulation of bmp-signaling. Subsequently required for proper formation of the intermediate tubule segment of the pronephros. This is Iroquois-class homeodomain protein irx-3 from Xenopus tropicalis (Western clawed frog).